The sequence spans 162 residues: Ribosome maturation factor RimP (162 aa).

Belongs to the RimP family.

Its subcellular location is the cytoplasm. Required for maturation of 30S ribosomal subunits. The chain is Ribosome maturation factor RimP from Cupriavidus necator (strain ATCC 17699 / DSM 428 / KCTC 22496 / NCIMB 10442 / H16 / Stanier 337) (Ralstonia eutropha).